The sequence spans 726 residues: Quinolinate synthase, chloroplastic (726 aa).

Residues 1–67 (MDAANLVMKS…KKPSNNSTFT (67 aa)) constitute a chloroplast transit peptide. Residue Cys133 is the Cysteine persulfide intermediate of the active site. Iminosuccinate contacts are provided by His283 and Ser309. Residue Cys363 coordinates [4Fe-4S] cluster. Iminosuccinate-binding positions include 392 to 394 (YIN) and Ser414. Cys487 contributes to the [4Fe-4S] cluster binding site. Iminosuccinate contacts are provided by residues 513–515 (HFE) and Thr538. Cys643 contributes to the [4Fe-4S] cluster binding site.

This sequence belongs to the quinolinate synthase family. Type 1 subfamily. As to quaternary structure, homodimer. The cofactor is [4Fe-4S] cluster.

The protein resides in the plastid. The protein localises to the chloroplast. It catalyses the reaction iminosuccinate + dihydroxyacetone phosphate = quinolinate + phosphate + 2 H2O + H(+). Its pathway is alkaloid biosynthesis; nicotine biosynthesis. It functions in the pathway cofactor biosynthesis; NAD(+) biosynthesis; quinolinate from iminoaspartate: step 1/1. In terms of biological role, involved in the biosynthesis of pyridine alkaloid natural products, leading mainly to the production of anabasine, anatabine, nicotine and nornicotine, effective deterrents against herbivores with antiparasitic and pesticide properties (neurotoxins); nornicotine serves as the precursor in the synthesis of the carcinogen compound N'-nitrosonornicotine (NNN). Catalyzes the condensation of iminoaspartate with dihydroxyacetone phosphate to form quinolinate. This Nicotiana tabacum (Common tobacco) protein is Quinolinate synthase, chloroplastic.